A 178-amino-acid chain; its full sequence is Crossover junction endodeoxyribonuclease RuvC (178 aa).

Catalysis depends on residues D11, E71, and D143. D11, E71, and D143 together coordinate Mg(2+).

The protein belongs to the RuvC family. Homodimer which binds Holliday junction (HJ) DNA. The HJ becomes 2-fold symmetrical on binding to RuvC with unstacked arms; it has a different conformation from HJ DNA in complex with RuvA. In the full resolvosome a probable DNA-RuvA(4)-RuvB(12)-RuvC(2) complex forms which resolves the HJ. Mg(2+) serves as cofactor.

It localises to the cytoplasm. It catalyses the reaction Endonucleolytic cleavage at a junction such as a reciprocal single-stranded crossover between two homologous DNA duplexes (Holliday junction).. Functionally, the RuvA-RuvB-RuvC complex processes Holliday junction (HJ) DNA during genetic recombination and DNA repair. Endonuclease that resolves HJ intermediates. Cleaves cruciform DNA by making single-stranded nicks across the HJ at symmetrical positions within the homologous arms, yielding a 5'-phosphate and a 3'-hydroxyl group; requires a central core of homology in the junction. The consensus cleavage sequence is 5'-(A/T)TT(C/G)-3'. Cleavage occurs on the 3'-side of the TT dinucleotide at the point of strand exchange. HJ branch migration catalyzed by RuvA-RuvB allows RuvC to scan DNA until it finds its consensus sequence, where it cleaves and resolves the cruciform DNA. The protein is Crossover junction endodeoxyribonuclease RuvC of Neisseria meningitidis serogroup A / serotype 4A (strain DSM 15465 / Z2491).